Reading from the N-terminus, the 324-residue chain is Olfactory receptor 6K2 (324 aa).

The Extracellular portion of the chain corresponds to 1-25 (MESPNRTTIQEFIFSAFPYSWVKSV). The N-linked (GlcNAc...) asparagine glycan is linked to Asn5. The chain crosses the membrane as a helical span at residues 26 to 46 (VCFVPLLFIYAFIVVGNLVII). Residues 47–54 (TVVQLNTH) are Cytoplasmic-facing. The helical transmembrane segment at 55 to 75 (LHTPMYTFISALSFLEIWYTT) threads the bilayer. Over 76–98 (ATIPKMLSSLLSERSISFNGCLL) the chain is Extracellular. A disulfide bond links Cys96 and Cys188. Residues 99-119 (QMYFFHSTGICEVCLLTVMAF) traverse the membrane as a helical segment. Over 120–138 (DHYLAICSPLHYPSIMTPK) the chain is Cytoplasmic. The helical transmembrane segment at 139 to 159 (LCTQLTLSCCVCGFITPLPEI) threads the bilayer. Residues 160–198 (AWISTLPFCGSNHLEHIFCDFLPVLRLACTDTRAIVMIQ) lie on the Extracellular side of the membrane. The chain crosses the membrane as a helical span at residues 199–218 (VVDVIHAVEIITAVMLIFMS). Residues 219–238 (YDGIVAVILRIHSAGGRRTA) are Cytoplasmic-facing. The helical transmembrane segment at 239-259 (FSTCVSHFIVFSLFFGSVTLM) threads the bilayer. Topologically, residues 260–272 (YLRFSATYSLFWD) are extracellular. Residues 273–293 (IAIALAFAVLSPFFNPIIYSL) form a helical membrane-spanning segment. The Cytoplasmic portion of the chain corresponds to 294 to 324 (RNKEIKEAIKKHIGQAKIFFSVRPGTSSKIF).

This sequence belongs to the G-protein coupled receptor 1 family.

Its subcellular location is the cell membrane. Functionally, odorant receptor. This Homo sapiens (Human) protein is Olfactory receptor 6K2 (OR6K2).